A 289-amino-acid chain; its full sequence is ATP synthase gamma chain (289 aa).

This sequence belongs to the ATPase gamma chain family. F-type ATPases have 2 components, CF(1) - the catalytic core - and CF(0) - the membrane proton channel. CF(1) has five subunits: alpha(3), beta(3), gamma(1), delta(1), epsilon(1). CF(0) has three main subunits: a, b and c.

It is found in the cell inner membrane. In terms of biological role, produces ATP from ADP in the presence of a proton gradient across the membrane. The gamma chain is believed to be important in regulating ATPase activity and the flow of protons through the CF(0) complex. The chain is ATP synthase gamma chain from Phocaeicola vulgatus (strain ATCC 8482 / DSM 1447 / JCM 5826 / CCUG 4940 / NBRC 14291 / NCTC 11154) (Bacteroides vulgatus).